Here is a 295-residue protein sequence, read N- to C-terminus: 4-hydroxy-tetrahydrodipicolinate synthase (295 aa).

Thr47 is a binding site for pyruvate. Tyr135 functions as the Proton donor/acceptor in the catalytic mechanism. The active-site Schiff-base intermediate with substrate is the Lys163. Position 206 (Ile206) interacts with pyruvate.

This sequence belongs to the DapA family. Homodimer.

It localises to the cytoplasm. It catalyses the reaction L-aspartate 4-semialdehyde + pyruvate = (2S,4S)-4-hydroxy-2,3,4,5-tetrahydrodipicolinate + H2O + H(+). Its pathway is amino-acid biosynthesis; L-lysine biosynthesis via DAP pathway; (S)-tetrahydrodipicolinate from L-aspartate: step 3/4. Catalyzes the condensation of (S)-aspartate-beta-semialdehyde [(S)-ASA] and pyruvate to 4-hydroxy-tetrahydrodipicolinate (HTPA). The polypeptide is 4-hydroxy-tetrahydrodipicolinate synthase (Staphylococcus aureus (strain MSSA476)).